The chain runs to 336 residues: Inositol 2-dehydrogenase (336 aa).

The protein belongs to the Gfo/Idh/MocA family. Homotetramer.

The catalysed reaction is myo-inositol + NAD(+) = scyllo-inosose + NADH + H(+). In terms of biological role, involved in the oxidation of myo-inositol (MI) to 2-keto-myo-inositol (2KMI or 2-inosose). The protein is Inositol 2-dehydrogenase of Agrobacterium fabrum (strain C58 / ATCC 33970) (Agrobacterium tumefaciens (strain C58)).